Here is a 286-residue protein sequence, read N- to C-terminus: Energy-coupling factor transporter ATP-binding protein EcfA2 (286 aa).

Residues 3–245 (IKIENLTYTY…IDTLEKVGLA (243 aa)) enclose the ABC transporter domain. 40–47 (GHTGSGKS) is a binding site for ATP.

The protein belongs to the ABC transporter superfamily. Energy-coupling factor EcfA family. As to quaternary structure, forms a stable energy-coupling factor (ECF) transporter complex composed of 2 membrane-embedded substrate-binding proteins (S component), 2 ATP-binding proteins (A component) and 2 transmembrane proteins (T component).

The protein resides in the cell membrane. In terms of biological role, ATP-binding (A) component of a common energy-coupling factor (ECF) ABC-transporter complex. Unlike classic ABC transporters this ECF transporter provides the energy necessary to transport a number of different substrates. This chain is Energy-coupling factor transporter ATP-binding protein EcfA2, found in Clostridium acetobutylicum (strain ATCC 824 / DSM 792 / JCM 1419 / IAM 19013 / LMG 5710 / NBRC 13948 / NRRL B-527 / VKM B-1787 / 2291 / W).